The following is a 361-amino-acid chain: Epi-isozizaene synthase (361 aa).

Mg(2+)-binding residues include aspartate 99, aspartate 103, asparagine 240, serine 244, and glutamate 248. The DDXXD motif motif lies at aspartate 99–aspartate 103.

It belongs to the terpene synthase family. Mg(2+) serves as cofactor. Requires Mn(2+) as cofactor. The cofactor is Fe(3+).

The enzyme catalyses (2E,6E)-farnesyl diphosphate = (+)-epi-isozizaene + diphosphate. It functions in the pathway sesquiterpene biosynthesis; epi-isozizaene biosynthesis. Functionally, catalyzes the cyclization of farnesyl diphosphate (FPP) to the sesquiterpene epi-isozizaene. The polypeptide is Epi-isozizaene synthase (cyc1) (Streptomyces coelicolor (strain ATCC BAA-471 / A3(2) / M145)).